The following is a 973-amino-acid chain: Ras-related protein Rab-44 (973 aa).

Residues 1 to 21 (MEKGKGVSRKGRKLASSRRRQ) show a composition bias toward basic residues. The disordered stretch occupies residues 1 to 42 (MEKGKGVSRKGRKLASSRRRQAREPADGQDAPVAAEAESWPS). One can recognise an EF-hand domain in the interval 77-111 (GGEEPQMIFDWVDVESRGHLSLEEFSSGLKNVFGS). The segment at 112 to 140 (SPGTHRLRTKRSLPSQRESVTSTLPVPEE) is disordered. The span at 123–135 (SLPSQRESVTSTL) shows a compositional bias: polar residues. The stretch at 219–310 (LYKVRQLYEE…ERDLAGQLEE (92 aa)) forms a coiled coil. Disordered regions lie at residues 319–368 (RGHL…FGNN), 421–481 (FSQE…GSFL), 493–708 (GTVE…GLAV), and 724–779 (EAQP…GKPQ). Over residues 428–440 (DPDPGPRGSPEVP) the composition is skewed to pro residues. Residues 445 to 457 (KDGKGVEDPKGQD) show a composition bias toward basic and acidic residues. Residues 513–524 (GLSSSPQSPAGS) show a composition bias toward low complexity. 3 stretches are compositionally biased toward basic and acidic residues: residues 548–559 (SLEREVMAEDLK), 598–608 (HLARQESHAKG), and 654–663 (SESHGLEARS). Polar residues predominate over residues 665 to 680 (ESPQQDDPLPNTSQPP). Residues 750-766 (AESRPEDPRTDLQEAER) show a composition bias toward basic and acidic residues. Residues 792–799 (GDSNVGKT), 840–844 (DTAGQ), and 898–901 (NKMD) contribute to the GTP site. Residues Cys971 and Cys972 are each lipidated (S-geranylgeranyl cysteine).

It belongs to the small GTPase superfamily. Rab family.

The protein localises to the cell membrane. The chain is Ras-related protein Rab-44 (Rab44) from Mus musculus (Mouse).